We begin with the raw amino-acid sequence, 1607 residues long: Phosphatidylinositol 3-kinase piki-1 (1607 aa).

The UIM domain occupies 2-21 (SDDEELQLAIEISKKTFKDE). Disordered stretches follow at residues 54 to 91 (EANS…HSQS), 105 to 128 (STSQ…KFPP), and 142 to 182 (PPPP…SFAS). Residues 58-69 (PGPSSYSGSLAT) are compositionally biased toward polar residues. The segment covering 158–169 (PPVPIHPTPPVS) has biased composition (pro residues). Positions 362–453 (ASTVKVVVYK…GDDVKLDLGV (92 aa)) constitute a PI3K-RBD domain. Residues 598–766 (KMDFLQIMLN…KIWDTEIYFP (169 aa)) form the C2 PI3K-type domain. Residues 776 to 953 (PQDFATLDIE…AIRCQNLQQK (178 aa)) form the PIK helical domain. In terms of domain architecture, PI3K/PI4K catalytic spans 1029 to 1303 (RIEECSVFNS…MIQNSLGSAF (275 aa)). Residues 1035–1041 (VFNSNAK) are G-loop. The tract at residues 1168–1176 (GIGDRHNDN) is catalytic loop. Residues 1187 to 1213 (HIDFGKYMGDWQMAAGFRRDRVPFVFT) are activation loop. In terms of domain architecture, PX spans 1344-1458 (GRISRVTVLK…TFFHSILRDN (115 aa)). Residues 1472-1601 (SQCQIYLKIE…KNCRTLEGWF (130 aa)) form the C2 domain.

It belongs to the PI3/PI4-kinase family.

It localises to the cell projection. Its subcellular location is the phagocytic cup. The protein resides in the cytoplasmic vesicle. The protein localises to the phagosome membrane. It is found in the cytoplasm. It catalyses the reaction a 1,2-diacyl-sn-glycero-3-phospho-(1D-myo-inositol) + ATP = a 1,2-diacyl-sn-glycero-3-phospho-(1D-myo-inositol-3-phosphate) + ADP + H(+). Phosphatidylinositol 3-kinase involved in clearance of apoptotic cell corpses by phagosomes. Phagosome maturation requires two sequential and non-overlapping pulses of phosphatidylinositol-3-phosphate (PI3P) on the vesicle surface which mediates recruitment of sortins snx-1 and lst-4 and small GTPases rab-5, rab-2 and rab-7. The first pulse is initiated by piki-1, then maintained by vps-34 which also produces the second pulse. Unlike vps-34, not involved in the formation of PI3P in early endosomes. The polypeptide is Phosphatidylinositol 3-kinase piki-1 (Caenorhabditis elegans).